The primary structure comprises 249 residues: Type III pantothenate kinase (249 aa).

Position 8–15 (8–15) interacts with ATP; that stretch reads DAGNSRLK. Residues Y95 and 102 to 105 contribute to the substrate site; that span reads GVDR. The active-site Proton acceptor is the D104. D125 contacts K(+). T128 is a binding site for ATP. T179 lines the substrate pocket.

The protein belongs to the type III pantothenate kinase family. In terms of assembly, homodimer. It depends on NH4(+) as a cofactor. Requires K(+) as cofactor.

It localises to the cytoplasm. It catalyses the reaction (R)-pantothenate + ATP = (R)-4'-phosphopantothenate + ADP + H(+). It functions in the pathway cofactor biosynthesis; coenzyme A biosynthesis; CoA from (R)-pantothenate: step 1/5. Its function is as follows. Catalyzes the phosphorylation of pantothenate (Pan), the first step in CoA biosynthesis. In Alkalilimnicola ehrlichii (strain ATCC BAA-1101 / DSM 17681 / MLHE-1), this protein is Type III pantothenate kinase.